Consider the following 372-residue polypeptide: Methylthioribose-1-phosphate isomerase 2 (372 aa).

Catalysis depends on D254, which acts as the Proton donor.

This sequence belongs to the eIF-2B alpha/beta/delta subunits family. MtnA subfamily.

Its subcellular location is the cytoplasm. The protein resides in the nucleus. It catalyses the reaction 5-(methylsulfanyl)-alpha-D-ribose 1-phosphate = 5-(methylsulfanyl)-D-ribulose 1-phosphate. It participates in amino-acid biosynthesis; L-methionine biosynthesis via salvage pathway; L-methionine from S-methyl-5-thio-alpha-D-ribose 1-phosphate: step 1/6. Functionally, catalyzes the interconversion of methylthioribose-1-phosphate (MTR-1-P) into methylthioribulose-1-phosphate (MTRu-1-P). The chain is Methylthioribose-1-phosphate isomerase 2 from Trypanosoma cruzi (strain CL Brener).